Consider the following 807-residue polypeptide: Glycerol-3-phosphate acyltransferase (807 aa).

An HXXXXD motif motif is present at residues 308-313 (CHRSHM).

It belongs to the GPAT/DAPAT family.

It localises to the cell inner membrane. It catalyses the reaction sn-glycerol 3-phosphate + an acyl-CoA = a 1-acyl-sn-glycero-3-phosphate + CoA. Its pathway is phospholipid metabolism; CDP-diacylglycerol biosynthesis; CDP-diacylglycerol from sn-glycerol 3-phosphate: step 1/3. The sequence is that of Glycerol-3-phosphate acyltransferase from Shewanella baltica (strain OS195).